A 118-amino-acid polypeptide reads, in one-letter code: Group 1 truncated hemoglobin GlbN (118 aa).

A heme-binding site is contributed by H70.

It belongs to the truncated hemoglobin family. Group I subfamily. In terms of assembly, monomer. Heme is required as a cofactor.

It is found in the membrane. The chain is Group 1 truncated hemoglobin GlbN (glbN) from Nostoc commune.